Here is a 363-residue protein sequence, read N- to C-terminus: Chorismate synthase (363 aa).

Residues R48 and R54 each contribute to the NADP(+) site. FMN contacts are provided by residues 131–133 (RSS), 244–245 (NA), G288, 303–307 (KPTSS), and R329.

This sequence belongs to the chorismate synthase family. Homotetramer. Requires FMNH2 as cofactor.

The enzyme catalyses 5-O-(1-carboxyvinyl)-3-phosphoshikimate = chorismate + phosphate. It participates in metabolic intermediate biosynthesis; chorismate biosynthesis; chorismate from D-erythrose 4-phosphate and phosphoenolpyruvate: step 7/7. Its function is as follows. Catalyzes the anti-1,4-elimination of the C-3 phosphate and the C-6 proR hydrogen from 5-enolpyruvylshikimate-3-phosphate (EPSP) to yield chorismate, which is the branch point compound that serves as the starting substrate for the three terminal pathways of aromatic amino acid biosynthesis. This reaction introduces a second double bond into the aromatic ring system. The protein is Chorismate synthase of Maricaulis maris (strain MCS10) (Caulobacter maris).